Reading from the N-terminus, the 305-residue chain is Auxin-responsive protein IAA27 (305 aa).

Residues 45 to 49 (LRLGL) carry the EAR-like (transcriptional repression) motif. 2 disordered regions span residues 96 to 119 (TTATGDVGSGSGPRTSVVKDGKST) and 155 to 180 (KNSMASSQSQKPGNNSETEEAEAKSG). Over residues 155–170 (KNSMASSQSQKPGNNS) the composition is skewed to polar residues. Positions 185–287 (CLYVKVSMEG…SCKKLRIMKS (103 aa)) constitute a PB1 domain.

Belongs to the Aux/IAA family. Homodimers and heterodimers. Interacts with phytochrome A. Interacts with TPL.

It is found in the nucleus. Functionally, aux/IAA proteins are short-lived transcriptional factors that function as repressors of early auxin response genes at low auxin concentrations. Repression is thought to result from the interaction with auxin response factors (ARFs), proteins that bind to the auxin-responsive promoter element (AuxRE). Formation of heterodimers with ARF proteins may alter their ability to modulate early auxin response genes expression. The chain is Auxin-responsive protein IAA27 (IAA27) from Arabidopsis thaliana (Mouse-ear cress).